The chain runs to 469 residues: Tubulin gamma-1 chain (469 aa).

142–148 contacts GTP; it reads AGGTGSG.

Belongs to the tubulin family.

Its subcellular location is the cytoplasm. The protein localises to the cytoskeleton. It is found in the microtubule organizing center. Tubulin is the major constituent of microtubules. The gamma chain is found at microtubule organizing centers (MTOC) such as the spindle poles, suggesting that it is involved in the minus-end nucleation of microtubule assembly. This is Tubulin gamma-1 chain (TUBG1) from Zea mays (Maize).